Consider the following 219-residue polypeptide: Thiamine-phosphate synthase (219 aa).

4-amino-2-methyl-5-(diphosphooxymethyl)pyrimidine-binding positions include 44–48 and Asn79; that span reads QFREK. Mg(2+)-binding residues include Asp80 and Asp99. Ser117 contacts 4-amino-2-methyl-5-(diphosphooxymethyl)pyrimidine. 143–145 contacts 2-[(2R,5Z)-2-carboxy-4-methylthiazol-5(2H)-ylidene]ethyl phosphate; that stretch reads TST. A 4-amino-2-methyl-5-(diphosphooxymethyl)pyrimidine-binding site is contributed by Lys146. 2-[(2R,5Z)-2-carboxy-4-methylthiazol-5(2H)-ylidene]ethyl phosphate contacts are provided by residues Gly175 and 195–196; that span reads IS.

It belongs to the thiamine-phosphate synthase family. The cofactor is Mg(2+).

It carries out the reaction 2-[(2R,5Z)-2-carboxy-4-methylthiazol-5(2H)-ylidene]ethyl phosphate + 4-amino-2-methyl-5-(diphosphooxymethyl)pyrimidine + 2 H(+) = thiamine phosphate + CO2 + diphosphate. The catalysed reaction is 2-(2-carboxy-4-methylthiazol-5-yl)ethyl phosphate + 4-amino-2-methyl-5-(diphosphooxymethyl)pyrimidine + 2 H(+) = thiamine phosphate + CO2 + diphosphate. It catalyses the reaction 4-methyl-5-(2-phosphooxyethyl)-thiazole + 4-amino-2-methyl-5-(diphosphooxymethyl)pyrimidine + H(+) = thiamine phosphate + diphosphate. It participates in cofactor biosynthesis; thiamine diphosphate biosynthesis; thiamine phosphate from 4-amino-2-methyl-5-diphosphomethylpyrimidine and 4-methyl-5-(2-phosphoethyl)-thiazole: step 1/1. Condenses 4-methyl-5-(beta-hydroxyethyl)thiazole monophosphate (THZ-P) and 2-methyl-4-amino-5-hydroxymethyl pyrimidine pyrophosphate (HMP-PP) to form thiamine monophosphate (TMP). This chain is Thiamine-phosphate synthase, found in Bacillus cereus (strain AH820).